We begin with the raw amino-acid sequence, 286 residues long: Putative WUSCHEL-related homeobox 2 (286 aa).

A disordered region spans residues 1 to 25 (MAPAVQQQQSGGGGGSTGAAAVGST). The segment at residues 23 to 87 (GSTTRWCPTP…NHKARDRQKL (65 aa)) is a DNA-binding region (homeobox; WUS-type).

Belongs to the WUS homeobox family.

It is found in the nucleus. In terms of biological role, transcription factor which may be involved in developmental processes. The protein is Putative WUSCHEL-related homeobox 2 (WOX2) of Oryza sativa subsp. japonica (Rice).